The sequence spans 215 residues: Cytochrome b6 (215 aa).

The chain crosses the membrane as a helical span at residues 32-52; sequence IFYCFGGIVFTCFLVQVATGF. Heme c is bound at residue C35. 2 residues coordinate heme b: H86 and H100. A run of 3 helical transmembrane segments spans residues 90–110, 116–136, and 186–206; these read ASMMVMMMVLHVFRVYLTGGF, LTWVTGVILAVVTVSFGVTGY, and AHTFVLPLAAAVLMLTHFLMI. Residues H187 and H202 each coordinate heme b.

Belongs to the cytochrome b family. PetB subfamily. The 4 large subunits of the cytochrome b6-f complex are cytochrome b6, subunit IV (17 kDa polypeptide, PetD), cytochrome f and the Rieske protein, while the 4 small subunits are PetG, PetL, PetM and PetN. The complex functions as a dimer. Heme b is required as a cofactor. The cofactor is heme c.

The protein localises to the plastid. It localises to the chloroplast thylakoid membrane. In terms of biological role, component of the cytochrome b6-f complex, which mediates electron transfer between photosystem II (PSII) and photosystem I (PSI), cyclic electron flow around PSI, and state transitions. In Trieres chinensis (Marine centric diatom), this protein is Cytochrome b6.